Consider the following 321-residue polypeptide: Phospholipid phosphatase-related protein type 5 (321 aa).

Helical transmembrane passes span 10-30 (SSML…AYYF), 62-82 (AVPP…VIIV), 122-142 (FLGI…AGQV), 196-213 (AALS…ITNT), 225-245 (VLCL…VAEY), and 252-272 (VIAG…CVVN).

This sequence belongs to the PA-phosphatase related phosphoesterase family. As to expression, isoform 1 is expressed in brain, lung, kidney and colon. Isoform 2 is expressed in placenta, skeletal muscle and kidney.

It localises to the cell membrane. In terms of biological role, induces filopodia formation and promotes neurite growth in a CDC42-independent manner; impedes neurite growth inhibitory-mediated axonal retraction. This is Phospholipid phosphatase-related protein type 5 from Homo sapiens (Human).